The chain runs to 78 residues: Omega-conotoxin PnVIA (78 aa).

An N-terminal signal peptide occupies residues 1 to 22 (MKLTCMMIIAVLFLTAWTFVMA). Residues 23–45 (DDPRDEPEARDEMNPAASKLNER) constitute a propeptide that is removed on maturation. Cystine bridges form between Cys47-Cys65, Cys54-Cys69, and Cys64-Cys73. The residue at position 76 (Gln76) is a Glutamine amide.

In terms of tissue distribution, expressed by the venom duct.

The protein localises to the secreted. Functionally, omega-conotoxins act at presynaptic membranes, they bind and block voltage-gated calcium channels (Cav). Acts on high voltage-activated (HVA) calcium currents in molluscan neurons. This chain is Omega-conotoxin PnVIA, found in Conus pennaceus (Feathered cone).